The primary structure comprises 865 residues: General transcription factor 3C polypeptide 5 (865 aa).

Disordered regions lie at residues 1–21, 111–163, 191–215, 391–522, and 669–865; these read MNDETNKNNSNINNNNNNNNS, RPNK…NEKF, NNNTKSESDNVNDSSSSSSSKTVPI, QDNH…NKEG, and DNKM…EESE. Composition is skewed to low complexity over residues 7–21, 115–126, 140–158, 199–210, and 401–411; these read KNNSNINNNNNNNNS, QQTQTQTQTQTQ, QSPKTTSRSKQQQQQQQPQ, DNVNDSSSSSSS, and SKNNNNNNNNK. 2 stretches are compositionally biased toward basic and acidic residues: residues 412 to 439 and 448 to 489; these read DSIKNKEKDNSNKEDKEHKEDKEDKQEE and NNEK…KGDD. Composition is skewed to low complexity over residues 508-521 and 677-696; these read EGNNNNNNNNNNKE and RSNTSTATTTSTKSTQPKST. 3 stretches are compositionally biased toward basic and acidic residues: residues 697–713, 757–766, and 773–786; these read QPKEPKLKSTQPKEPRP, QNKEIDESLK, and MEKDNEYLHGKNEE. 2 stretches are compositionally biased toward acidic residues: residues 800–820 and 839–865; these read DYDDDDDDEDKPFELLDDFDG and EDSEEDESDFDEEEEEEEEDFEFEESE.

Belongs to the TFIIIC subunit 5 family. Part of the TFIIIC complex.

The protein localises to the nucleus. Functionally, involved in RNA polymerase III-mediated transcription. Integral, tightly associated component of the DNA-binding TFIIIC2 subcomplex that directly binds tRNA and virus-associated RNA promoters. The polypeptide is General transcription factor 3C polypeptide 5 (gtf3c5) (Dictyostelium discoideum (Social amoeba)).